A 271-amino-acid polypeptide reads, in one-letter code: Probable CAAX prenyl protease 2 (271 aa).

The next 2 membrane-spanning stretches (helical) occupy residues 3 to 23 and 42 to 62; these read VYLI…TFPV and CISV…IIGP. Active-site proton donor/acceptor residues include Glu126 and His160. 2 consecutive transmembrane segments (helical) span residues 174 to 194 and 236 to 256; these read AYIA…VFGW and IYYT…GITD.

This sequence belongs to the peptidase U48 family.

It is found in the endoplasmic reticulum membrane. It catalyses the reaction Hydrolyzes the peptide bond -P2-(S-farnesyl or geranylgeranyl)C-P1'-P2'-P3'-COOH where P1' and P2' are amino acids with aliphatic sidechains and P3' is any C-terminal residue.. Functionally, protease involved in the processing of a variety of prenylated proteins containing the C-terminal CAAX motif, where C is a cysteine modified with an isoprenoid lipid, A is an aliphatic amino acid and X is any C-terminal amino acid. Proteolytically removes the C-terminal three residues of farnesylated proteins, leaving the prenylated cysteine as the new C-terminus. In Schizosaccharomyces pombe (strain 972 / ATCC 24843) (Fission yeast), this protein is Probable CAAX prenyl protease 2.